A 547-amino-acid chain; its full sequence is Glucose-6-phosphate isomerase (547 aa).

Glu-351 serves as the catalytic Proton donor. Catalysis depends on residues His-382 and Lys-509.

The protein belongs to the GPI family.

The protein resides in the cytoplasm. It catalyses the reaction alpha-D-glucose 6-phosphate = beta-D-fructose 6-phosphate. It functions in the pathway carbohydrate biosynthesis; gluconeogenesis. It participates in carbohydrate degradation; glycolysis; D-glyceraldehyde 3-phosphate and glycerone phosphate from D-glucose: step 2/4. Its function is as follows. Catalyzes the reversible isomerization of glucose-6-phosphate to fructose-6-phosphate. The protein is Glucose-6-phosphate isomerase of Coxiella burnetii (strain RSA 493 / Nine Mile phase I).